A 576-amino-acid chain; its full sequence is DM7 family protein GD16138 (576 aa).

The tract at residues 454-481 (FPELEPDSEPEPEPEPQTEDEGEDEGDK) is disordered. Acidic residues predominate over residues 457–478 (LEPDSEPEPEPEPQTEDEGEDE).

This sequence belongs to the DM7 family.

This Drosophila simulans (Fruit fly) protein is DM7 family protein GD16138.